We begin with the raw amino-acid sequence, 101 residues long: NAD(P)H-quinone oxidoreductase subunit 4L, chloroplastic (101 aa).

The next 3 helical transmembrane spans lie at 2–22 (ILEH…YGLI), 32–52 (MCLE…SDFF), and 61–81 (IFCI…LAIV).

The protein belongs to the complex I subunit 4L family. As to quaternary structure, NDH is composed of at least 16 different subunits, 5 of which are encoded in the nucleus.

It is found in the plastid. Its subcellular location is the chloroplast thylakoid membrane. The enzyme catalyses a plastoquinone + NADH + (n+1) H(+)(in) = a plastoquinol + NAD(+) + n H(+)(out). It carries out the reaction a plastoquinone + NADPH + (n+1) H(+)(in) = a plastoquinol + NADP(+) + n H(+)(out). Functionally, NDH shuttles electrons from NAD(P)H:plastoquinone, via FMN and iron-sulfur (Fe-S) centers, to quinones in the photosynthetic chain and possibly in a chloroplast respiratory chain. The immediate electron acceptor for the enzyme in this species is believed to be plastoquinone. Couples the redox reaction to proton translocation, and thus conserves the redox energy in a proton gradient. This Arabis hirsuta (Hairy rock-cress) protein is NAD(P)H-quinone oxidoreductase subunit 4L, chloroplastic.